We begin with the raw amino-acid sequence, 505 residues long: Glutamate--tRNA ligase (505 aa).

The short motif at 16-26 is the 'HIGH' region element; it reads PSPTGFPHVGT. A 'KMSKS' region motif is present at residues 257 to 261; that stretch reads KLSKR. Position 260 (lysine 260) interacts with ATP.

Belongs to the class-I aminoacyl-tRNA synthetase family. Glutamate--tRNA ligase type 1 subfamily. In terms of assembly, monomer.

The protein resides in the cytoplasm. It carries out the reaction tRNA(Glu) + L-glutamate + ATP = L-glutamyl-tRNA(Glu) + AMP + diphosphate. In terms of biological role, catalyzes the attachment of glutamate to tRNA(Glu) in a two-step reaction: glutamate is first activated by ATP to form Glu-AMP and then transferred to the acceptor end of tRNA(Glu). This Psychrobacter sp. (strain PRwf-1) protein is Glutamate--tRNA ligase.